Consider the following 1591-residue polypeptide: GATOR1 complex protein DEPDC5 (1591 aa).

Disordered regions lie at residues 427–455, 478–532, and 695–720; these read GKKS…TLPI, LATC…STNI, and LSNS…STSP. Residues 430–439 are compositionally biased toward basic and acidic residues; it reads SASEKTKNGR. Positions 494-508 are enriched in low complexity; sequence SASSCDVSSSPSLPS. Residue Ser-505 is modified to Phosphoserine. Polar residues predominate over residues 518–532; that stretch reads SQASDDSSLGKSTNI. Ser-992 carries the phosphoserine modification. Disordered regions lie at residues 1040-1064 and 1118-1153; these read SQKS…ENSS and STGQ…SSQQ. Polar residues predominate over residues 1118–1149; sequence STGQPMDRGNNQTFGNSQNIEQAFPSANSGDY. A DEP domain is found at 1175–1250; that stretch reads PSTGVQLLSE…YGFYFYKIVM (76 aa). At Ser-1518 the chain carries Phosphoserine.

This sequence belongs to the IML1 family. As to quaternary structure, within the GATOR complex, component of the GATOR1 subcomplex, made of DEPDC5, NPRL2 and NPRL3. GATOR1 mediates the strong interaction of the GATOR complex with small GTPases Rag (RagA/RRAGA, RagB/RRAGB, RagC/RRAGC and/or RagD/RRAGD) heterodimers. GATOR1 interacts with GPR155/LYCHOS; interaction takes place in presence of cholesterol and prevents interaction between GATOR1 and KICSTOR. Interacts with SAMTOR; interaction is direct and takes place in presence of methionine, leading to inhibit the activity of the GATOR1 complex. Phosphorylation at Ser-992 and Ser-1518 by AKT1 and PIM1 inhibit the activity of DEPDC5, releasing inhibition of the mTORC1 pathway. In terms of processing, ubiquitinated. Amino acid-induced 'Lys-48'-linked polyubiquitination of DEPDC5 by the BCR(KLHL22) ubiquitin ligase complex leads to DEPDC5 proteasomal degradation and inhibition of the GATOR1 complex. Ubiquitination may occur at multiple lysines. In terms of tissue distribution, expressed at low levels in all brain regions. Expressed throughout brain development, including in midgestation embryonic head (11.5 dpc), neonatal brain and whole adult brain. Present in neurons and absent in non-neuronal cells, including astrocytes (at protein level).

It localises to the lysosome membrane. It is found in the cytoplasm. The protein resides in the cytosol. The protein localises to the perinuclear region. As a component of the GATOR1 complex functions as an inhibitor of the amino acid-sensing branch of the mTORC1 pathway. In response to amino acid depletion, the GATOR1 complex has GTPase activating protein (GAP) activity and strongly increases GTP hydrolysis by RagA/RRAGA (or RagB/RRAGB) within heterodimeric Rag complexes, thereby turning them into their inactive GDP-bound form, releasing mTORC1 from lysosomal surface and inhibiting mTORC1 signaling. In the presence of abundant amino acids, the GATOR1 complex is negatively regulated by GATOR2, the other GATOR subcomplex, in this amino acid-sensing branch of the TORC1 pathway. Within the GATOR1 complex, DEPDC5 mediates direct interaction with the nucleotide-binding pocket of small GTPases Rag (RagA/RRAGA, RagB/RRAGB, RagC/RRAGC and/or RagD/RRAGD) and coordinates their nucleotide loading states by promoting RagA/RRAGA or RagB/RRAGB into their GDP-binding state and RagC/RRAGC or RagD/RRAGD into their GTP-binding state. However, it does not execute the GAP activity, which is mediated by NPRL2. The polypeptide is GATOR1 complex protein DEPDC5 (Mus musculus (Mouse)).